Here is a 234-residue protein sequence, read N- to C-terminus: Large ribosomal subunit protein uL1 (234 aa).

The protein belongs to the universal ribosomal protein uL1 family. In terms of assembly, part of the 50S ribosomal subunit.

Its function is as follows. Binds directly to 23S rRNA. The L1 stalk is quite mobile in the ribosome, and is involved in E site tRNA release. Functionally, protein L1 is also a translational repressor protein, it controls the translation of the L11 operon by binding to its mRNA. In Campylobacter fetus subsp. fetus (strain 82-40), this protein is Large ribosomal subunit protein uL1.